We begin with the raw amino-acid sequence, 221 residues long: MILVLAESAIELVPREIWSHPAVASDARRRGKRPGEILLDRARHHPAMAGLEDGARRGRPDIVHQVLLVFQYSLLNRRGLGRVYIHTRGDYIIQVKPQTRIPKNYNNFVSLMEQLYALGRAPPHGDSLMELHRGSLAGLLEQLGGRWVVLHERGARRRFAELGAALLNSVVVVGGFPHGDFSNRWVLEKAEAVYSVGDEPLDAAQAVCRAVAAAEASAGLI.

S-adenosyl-L-methionine contacts are provided by residues Gly-174, Gly-179, and 196-201; that span reads VGDEPL.

This sequence belongs to the class IV-like SAM-binding methyltransferase superfamily. RNA methyltransferase NEP1 family. As to quaternary structure, homodimer.

It catalyses the reaction a pseudouridine in rRNA + S-adenosyl-L-methionine = an N(1)-methylpseudouridine in rRNA + S-adenosyl-L-homocysteine + H(+). In terms of biological role, methyltransferase involved in ribosomal biogenesis. Specifically catalyzes the N1-methylation of the pseudouridine corresponding to position 914 in M.jannaschii 16S rRNA. In Pyrobaculum neutrophilum (strain DSM 2338 / JCM 9278 / NBRC 100436 / V24Sta) (Thermoproteus neutrophilus), this protein is Ribosomal RNA small subunit methyltransferase Nep1.